A 188-amino-acid chain; its full sequence is UPF0301 protein PD_1276 (188 aa).

Belongs to the UPF0301 (AlgH) family.

In Xylella fastidiosa (strain Temecula1 / ATCC 700964), this protein is UPF0301 protein PD_1276.